The following is a 428-amino-acid chain: Phosphomethylpyrimidine synthase (428 aa).

Residues asparagine 66, methionine 94, tyrosine 123, histidine 162, 184 to 186 (SRG), 225 to 228 (DALR), and glutamate 264 each bind substrate. Zn(2+) is bound at residue histidine 268. Tyrosine 291 is a substrate binding site. Histidine 332 contacts Zn(2+). [4Fe-4S] cluster is bound by residues cysteine 408, cysteine 411, and cysteine 415.

It belongs to the ThiC family. It depends on [4Fe-4S] cluster as a cofactor.

The enzyme catalyses 5-amino-1-(5-phospho-beta-D-ribosyl)imidazole + S-adenosyl-L-methionine = 4-amino-2-methyl-5-(phosphooxymethyl)pyrimidine + CO + 5'-deoxyadenosine + formate + L-methionine + 3 H(+). Its pathway is cofactor biosynthesis; thiamine diphosphate biosynthesis. Catalyzes the synthesis of the hydroxymethylpyrimidine phosphate (HMP-P) moiety of thiamine from aminoimidazole ribotide (AIR) in a radical S-adenosyl-L-methionine (SAM)-dependent reaction. This is Phosphomethylpyrimidine synthase from Sulfolobus acidocaldarius (strain ATCC 33909 / DSM 639 / JCM 8929 / NBRC 15157 / NCIMB 11770).